Reading from the N-terminus, the 1342-residue chain is DNA-directed RNA polymerase subunit beta (1342 aa).

Belongs to the RNA polymerase beta chain family. As to quaternary structure, the RNAP catalytic core consists of 2 alpha, 1 beta, 1 beta' and 1 omega subunit. When a sigma factor is associated with the core the holoenzyme is formed, which can initiate transcription.

The enzyme catalyses RNA(n) + a ribonucleoside 5'-triphosphate = RNA(n+1) + diphosphate. Functionally, DNA-dependent RNA polymerase catalyzes the transcription of DNA into RNA using the four ribonucleoside triphosphates as substrates. The polypeptide is DNA-directed RNA polymerase subunit beta (Salmonella agona (strain SL483)).